The chain runs to 411 residues: Diels-Alderase ffsF (411 aa).

A signal peptide spans M1–S17.

Belongs to the Diels-Alderase family.

It participates in mycotoxin biosynthesis. Diels-Alderase; part of the gene cluster that mediates the biosynthesis of the cytotoxic leucine-containing cytochalasans, including aspochalasin C, aspochalasin E, TMC-169, flavichalasine F, aspergillin PZ, aspochalasin M and flavichalasine G. The first step in the pathway is catalyzed by the hybrid PKS-NRPS ffsA that utilizes 8 units of malonyl-CoA to iteratively assemble the octaketide chain before addition of L-leucine by the C-terminal NRPS modules. Because ffsA lacks a designated enoylreductase (ER) domain, the required activity is provided the enoyl reductase fssC. The methyltransferase (MT) domain of ffsA catalyzes the alpha-methylation at C10 and C14 using S-adenosyl-L-methionine as the methyl-donating cosubstrate. Reduction by the hydrolyase ffsE, followed by dehydration and intra-molecular Diels-Alder cyclization by the Diels-Alderase ffsF then yield the required isoindolone-fused macrocycle. A number of oxidative steps catalyzed by the tailoring cytochrome P450 monooxygenase ffsD, the FAD-linked oxidoreductase ffsJ and the short-chain dehydrogenase/reductase ffsI, are further required to afford the final products. This is Diels-Alderase ffsF from Aspergillus flavipes.